Reading from the N-terminus, the 327-residue chain is MDKETNDNEYRRQSEHRTSAPKRKKKKKIRKLPIILLIVVILLIALVVYIVHSYNSGVEYAKKHAKDVKVHQFNGPVKNDGKISILVLGADKAQGGQSRTDSIMVVQYDFINKKMKMMSVMRDIYADIPGYGKHKINSAYALGGPELLRKTLDKNLGINPEYYAVVDFTGFEKMIDELMPEGVPINVEKDMSKNIGVSLKKGNHRLNGKELLGYARFRHDPEGDFGRVRRQQQVMQTLKKEMVNFRTVVKLPKVAGILRGYVNTNIPDSGIFQTGLSFGIRGEKDVKSLTVPIKNSYEDVNTNTDGSALQINKNTNKQAIKDFLDED.

The segment covering 1 to 18 (MDKETNDNEYRRQSEHRT) has biased composition (basic and acidic residues). Positions 1–24 (MDKETNDNEYRRQSEHRTSAPKRK) are disordered. Topologically, residues 1-31 (MDKETNDNEYRRQSEHRTSAPKRKKKKKIRK) are cytoplasmic. Residues 32–52 (LPIILLIVVILLIALVVYIVH) form a helical; Signal-anchor for type II membrane protein membrane-spanning segment. Residues 53–327 (SYNSGVEYAK…QAIKDFLDED (275 aa)) lie on the Extracellular side of the membrane.

The protein belongs to the LytR/CpsA/Psr (LCP) family.

It is found in the cell membrane. Its function is as follows. Involved in SarA attenuation. Affects resistance to oxacillin and teicoplanin, as well as the synthesis of virulence factors. The protein is Regulatory protein MsrR (msrR) of Staphylococcus aureus (strain NCTC 8325 / PS 47).